Reading from the N-terminus, the 136-residue chain is Transmembrane protein 203 (136 aa).

The next 4 membrane-spanning stretches (helical) occupy residues 14–34, 50–72, 81–101, and 112–132; these read FAQL…VLLA, FIPF…VRLF, VLRL…EMLL, and LWYG…MIRA.

Its subcellular location is the endoplasmic reticulum membrane. The protein localises to the endoplasmic reticulum-Golgi intermediate compartment. Functionally, involved in the regulation of cellular calcium homeotasis. May act as a regulator of STING-mediated inflammatory signaling in macrophages. In Xenopus laevis (African clawed frog), this protein is Transmembrane protein 203 (tmem203).